Reading from the N-terminus, the 65-residue chain is MPKLKTRKAAAKRFKATGTGKFTRRRAFRNHLLDHKTPKQKRHLATKAVVHETDELRVVRMLPYA.

The protein belongs to the bacterial ribosomal protein bL35 family.

This chain is Large ribosomal subunit protein bL35, found in Parasynechococcus marenigrum (strain WH8102).